The sequence spans 45 residues: Thymosin beta-15A (45 aa).

2 stretches are compositionally biased toward basic and acidic residues: residues 1-27 and 35-45; these read MSDK…EEKN and IQQEKECVQTS. The tract at residues 1 to 45 is disordered; sequence MSDKPDLSEVEKFDRSKLKKTNTEEKNTLPSKETIQQEKECVQTS.

The protein belongs to the thymosin beta family. As to expression, neuroblastoma-specific.

It is found in the cytoplasm. The protein localises to the cytoskeleton. Plays an important role in the organization of the cytoskeleton. Binds to and sequesters actin monomers (G actin) and therefore inhibits actin polymerization. The protein is Thymosin beta-15A (TMSB15A) of Homo sapiens (Human).